The sequence spans 138 residues: Small ribosomal subunit protein uS12 (138 aa).

The disordered stretch occupies residues 33-55; the sequence is KEHTNVSSPQKRGVCTRVGTMTP.

It belongs to the universal ribosomal protein uS12 family. In terms of assembly, part of the 30S ribosomal subunit. Contacts proteins S8 and S17. May interact with IF1 in the 30S initiation complex. Interacts with BrxC.

Functionally, with S4 and S5 plays an important role in translational accuracy. Interacts with and stabilizes bases of the 16S rRNA that are involved in tRNA selection in the A site and with the mRNA backbone. Located at the interface of the 30S and 50S subunits, it traverses the body of the 30S subunit contacting proteins on the other side and probably holding the rRNA structure together. The combined cluster of proteins S8, S12 and S17 appears to hold together the shoulder and platform of the 30S subunit. The polypeptide is Small ribosomal subunit protein uS12 (rpsL) (Bacillus subtilis (strain 168)).